A 166-amino-acid chain; its full sequence is MKLMDNKNIKKLTLLAIWTALTFVLGRLFTFPIPGSAGNILTLLDVGIYTAVFLFGKREAAIIGGFAAFLLDLTAGFSNYMFFSLIIHGGQGYLAGLTRYKWLNFLLSLLVMVGGYFIVGGLMYGWGSAIAGLWVNIVQVIVGFVLAKVLSPLIERTGILNGFRKA.

5 consecutive transmembrane segments (helical) span residues 14–34 (LLAI…FPIP), 35–55 (GSAG…VFLF), 62–82 (IIGG…NYMF), 105–125 (FLLS…LMYG), and 126–146 (WGSA…GFVL).

In E.coli forms a stable energy-coupling factor (ECF) transporter complex composed of 2 membrane-embedded substrate-binding protein (S component), 2 ATP-binding proteins (A and A' components) and 2 transmembrane proteins (T component), probably with a stoichiometry of 2:1:1:2. May be able to interact with more than 1 S component at a time.

The protein resides in the cell membrane. Its function is as follows. Probably a thiamine precursor-binding protein that interacts with the energy-coupling factor (ECF) ABC-transporter complex. Unlike classic ABC transporters this ECF transporter provides the energy necessary to transport a number of different substrates. The substrates themselves are bound by transmembrane, not extracytoplasmic soluble proteins. In Lactococcus lactis subsp. cremoris (strain MG1363), this protein is Thiamine precursor transporter HmpT (hmpT).